Here is a 130-residue protein sequence, read N- to C-terminus: 3-aminoacrylate deaminase RutC (130 aa).

It belongs to the RutC family.

It carries out the reaction (Z)-3-aminoacrylate + H2O + H(+) = 3-oxopropanoate + NH4(+). Its function is as follows. Involved in pyrimidine catabolism. Catalyzes the deamination of 3-aminoacrylate to malonic semialdehyde, a reaction that can also occur spontaneously. RutC may facilitate the reaction and modulate the metabolic fitness, rather than catalyzing essential functions. This chain is 3-aminoacrylate deaminase RutC, found in Variovorax paradoxus (strain S110).